The following is a 501-amino-acid chain: Group 3 secretory phospholipase A2 (501 aa).

An N-terminal signal peptide occupies residues 1 to 19 (MGVLVVLLGVLSFLGRTLG). The interval 119–139 (RGPAESPAGTREKRAAGQNGV) is disordered. Residues 150 to 291 (GWTVPGTLWC…SWSSPATSLT (142 aa)) are phospholipase A2-like. Residues Trp158, Gly160, and Gly162 each contribute to the Ca(2+) site. Cystine bridges form between Cys159–Cys181, Cys180–Cys220, Cys187–Cys213, and Cys211–Cys244. Asn167 is a glycosylation site (N-linked (GlcNAc...) asparagine). His184 is a catalytic residue. Asp185 contacts Ca(2+). Asp214 is an active-site residue. A glycan (N-linked (GlcNAc...) asparagine) is linked at Asn280. The segment covering 284–298 (SSPATSLTPSPQNPA) has biased composition (polar residues). Residues 284–339 (SSPATSLTPSPQNPALSRPQPMQHPQQWPSEWKESKSPSKTNATALQAPVASPGSD) are disordered. Residues Asn325 and Asn403 are each glycosylated (N-linked (GlcNAc...) asparagine).

This sequence belongs to the phospholipase A2 family. Ca(2+) serves as cofactor. Post-translationally, N-glycosylation does not affect the catalytic activity, but is required for proper secretion. A nonglycosylated form was observed in several cell types. In terms of processing, in several cell types, the N- and C-termini are cleaved off.

The protein resides in the secreted. Its subcellular location is the cell membrane. It is found in the cytoplasm. The protein localises to the cytoskeleton. It localises to the microtubule organizing center. The protein resides in the centrosome. Its subcellular location is the centriole. It is found in the recycling endosome. The enzyme catalyses a 1,2-diacyl-sn-glycero-3-phosphocholine + H2O = a 1-acyl-sn-glycero-3-phosphocholine + a fatty acid + H(+). The catalysed reaction is 1-hexadecanoyl-2-(9Z,12Z-octadecadienoyl)-sn-glycero-3-phosphocholine + H2O = (9Z,12Z)-octadecadienoate + 1-hexadecanoyl-sn-glycero-3-phosphocholine + H(+). It catalyses the reaction 1-hexadecanoyl-2-(5Z,8Z,11Z,14Z-eicosatetraenoyl)-sn-glycero-3-phosphocholine + H2O = 1-hexadecanoyl-sn-glycero-3-phosphocholine + (5Z,8Z,11Z,14Z)-eicosatetraenoate + H(+). It carries out the reaction 1-hexadecanoyl-2-(9Z,12Z-octadecadienoyl)-sn-glycero-3-phosphoethanolamine + H2O = 1-hexadecanoyl-sn-glycero-3-phosphoethanolamine + (9Z,12Z)-octadecadienoate + H(+). The enzyme catalyses 1-hexadecanoyl-2-(5Z,8Z,11Z,14Z-eicosatetraenoyl)-sn-glycero-3-phosphoethanolamine + H2O = 1-hexadecanoyl-sn-glycero-3-phosphoethanolamine + (5Z,8Z,11Z,14Z)-eicosatetraenoate + H(+). Functionally, secretory calcium-dependent phospholipase A2 that primarily targets extracellular phospholipids. Hydrolyzes the ester bond of the fatty acyl group attached at sn-2 position of phospholipids without apparent head group selectivity. Contributes to phospholipid remodeling of low-density lipoprotein (LDL) and high-density lipoprotein (HDL) particles. Hydrolyzes LDL phospholipids releasing unsaturated fatty acids that regulate macrophage differentiation toward foam cells. May act in an autocrine and paracrine manner. Secreted by immature mast cells, acts on nearby fibroblasts upstream to PTDGS to synthesize prostaglandin D2 (PGD2), which in turn promotes mast cell maturation and degranulation via PTGDR. Secreted by epididymal epithelium, acts on immature sperm cells within the duct, modulating the degree of unsaturation of the fatty acyl components of phosphatidylcholines required for acrosome assembly and sperm cell motility. Facilitates the replacement of fatty acyl chains in phosphatidylcholines in sperm membranes from omega-6 and omega-9 to omega-3 polyunsaturated fatty acids (PUFAs). Coupled to lipoxygenase pathway, may process omega-6 PUFAs to generate oxygenated lipid mediators in the male reproductive tract. At pericentrosomal preciliary compartment, negatively regulates ciliogenesis likely by regulating endocytotic recycling of ciliary membrane protein. Coupled to cyclooxygenase pathway provides arachidonate to generate prostaglandin E2 (PGE2), a potent immunomodulatory lipid in inflammation and tumorigenesis. At colonic epithelial barrier, preferentially hydrolyzes phospholipids having arachidonate and docosahexaenoate at sn-2 position, contributing to the generation of oxygenated metabolites involved in colonic stem cell homeostasis. Releases C16:0 and C18:0 lysophosphatidylcholine subclasses from neuron plasma membranes and promotes neurite outgrowth and neuron survival. The polypeptide is Group 3 secretory phospholipase A2 (PLA2G3) (Bos taurus (Bovine)).